The chain runs to 262 residues: 4-hydroxy-2-oxo-heptane-1,7-dioate aldolase (262 aa).

The active-site Proton acceptor is the histidine 45. Substrate is bound at residue glutamine 147. An a divalent metal cation-binding site is contributed by glutamate 149. Alanine 174 and aspartate 175 together coordinate substrate. Residue aspartate 175 coordinates a divalent metal cation.

The protein belongs to the HpcH/HpaI aldolase family. In terms of assembly, homohexamer; trimer of dimers. A divalent metal cation serves as cofactor.

The catalysed reaction is 4-hydroxy-2-oxoheptanedioate = succinate semialdehyde + pyruvate. It participates in aromatic compound metabolism; 4-hydroxyphenylacetate degradation; pyruvate and succinate semialdehyde from 4-hydroxyphenylacetate: step 7/7. Catalyzes the reversible retro-aldol cleavage of 4-hydroxy-2-ketoheptane-1,7-dioate (HKHD) to pyruvate and succinic semialdehyde. The polypeptide is 4-hydroxy-2-oxo-heptane-1,7-dioate aldolase (Shigella boydii serotype 4 (strain Sb227)).